A 152-amino-acid chain; its full sequence is Transcriptional regulator MraZ (152 aa).

SpoVT-AbrB domains lie at 5 to 52 and 81 to 124; these read ATLV…PLPE and ASEC…DETT.

Belongs to the MraZ family. Forms oligomers.

The protein resides in the cytoplasm. It is found in the nucleoid. Its function is as follows. Negatively regulates its own expression and that of the subsequent genes in the proximal part of the division and cell wall (dcw) gene cluster. Acts by binding directly to DNA. May also regulate the expression of genes outside the dcw cluster. This chain is Transcriptional regulator MraZ, found in Escherichia fergusonii (strain ATCC 35469 / DSM 13698 / CCUG 18766 / IAM 14443 / JCM 21226 / LMG 7866 / NBRC 102419 / NCTC 12128 / CDC 0568-73).